A 348-amino-acid chain; its full sequence is L-threonine 3-dehydrogenase (348 aa).

Residue Cys42 participates in Zn(2+) binding. Active-site charge relay system residues include Thr44 and His47. Residues His67, Glu68, Cys97, Cys100, Cys103, and Cys111 each coordinate Zn(2+). NAD(+) contacts are provided by residues Leu179, Glu199, Arg204, 266–268 (LGL), and 291–292 (IT).

Belongs to the zinc-containing alcohol dehydrogenase family. As to quaternary structure, homotetramer. Zn(2+) serves as cofactor.

The protein resides in the cytoplasm. The enzyme catalyses L-threonine + NAD(+) = (2S)-2-amino-3-oxobutanoate + NADH + H(+). It functions in the pathway amino-acid degradation; L-threonine degradation via oxydo-reductase pathway; glycine from L-threonine: step 1/2. In terms of biological role, catalyzes the NAD(+)-dependent oxidation of L-threonine to 2-amino-3-ketobutyrate. The sequence is that of L-threonine 3-dehydrogenase from Pyrococcus abyssi (strain GE5 / Orsay).